The primary structure comprises 580 residues: F-box only protein 24 (580 aa).

One can recognise an F-box domain in the interval 36–82 (PISIQLFPPELVEHIISFLPVRDLVALGQTCRYFHEVCDGEGVWRRI). Residues 376 to 425 (GRIFMQGNNRYGQLGTGDKMDRGEPTQVCYLQRPITLWCGLNHSLVLSQS) form an RCC1 repeat.

In terms of assembly, directly interacts with SKP1 and CUL1.

In terms of biological role, substrate-recognition component of the SCF (SKP1-CUL1-F-box protein)-type E3 ubiquitin ligase complex. The sequence is that of F-box only protein 24 (FBXO24) from Homo sapiens (Human).